The chain runs to 138 residues: Beta-galactosidase (138 aa).

This sequence belongs to the glycosyl hydrolase 2 family.

It catalyses the reaction Hydrolysis of terminal non-reducing beta-D-galactose residues in beta-D-galactosides.. The chain is Beta-galactosidase (lacZ) from Rhizobium radiobacter (Agrobacterium tumefaciens).